The sequence spans 352 residues: Ion-translocating oxidoreductase complex subunit D (352 aa).

Helical transmembrane passes span Ile20–Gly40, Gly42–Leu62, Val69–Pro91, and Pro123–Leu143. FMN phosphoryl threonine is present on Thr187. 5 helical membrane passes run Leu215–Leu235, Trp242–Phe262, Leu267–Leu287, Leu301–Pro321, and Asp322–Thr342.

The protein belongs to the NqrB/RnfD family. In terms of assembly, the complex is composed of six subunits: RsxA, RsxB, RsxC, RsxD, RsxE and RsxG. Requires FMN as cofactor.

The protein resides in the cell inner membrane. Functionally, part of a membrane-bound complex that couples electron transfer with translocation of ions across the membrane. Required to maintain the reduced state of SoxR. The protein is Ion-translocating oxidoreductase complex subunit D of Salmonella enteritidis PT4 (strain P125109).